Reading from the N-terminus, the 100-residue chain is Small ubiquitin-related modifier 1 (100 aa).

The segment covering 1-12 has biased composition (basic and acidic residues); that stretch reads MSANQEEDKKPG. The interval 1–21 is disordered; that stretch reads MSANQEEDKKPGDGGAHINLK. The Ubiquitin-like domain occupies 16-93; that stretch reads AHINLKVKGQ…IDAMLHQTGG (78 aa). Gly-93 participates in a covalent cross-link: Glycyl lysine isopeptide (Gly-Lys) (interchain with K-? in acceptor proteins).

Belongs to the ubiquitin family. SUMO subfamily. Interacts with SAE2, SCE1, SIZ1 and MMS21. Interacts with HSFA2. Covalently attached to ABI5, FLD, GTE3, HSFA2 and ICE1.

It is found in the nucleus. The protein localises to the cytoplasm. Ubiquitin-like protein which can be covalently attached to target lysines as a monomer. Does not seem to be involved in protein degradation and may function as an antagonist of ubiquitin in the degradation process. Required for the massive protein sumoylation in the nucleus induced by heat shock and controlled by SIZ1. Involved in the regulation of the heat stress transcription factor HSFA2 in acquired thermotolerance. This Arabidopsis thaliana (Mouse-ear cress) protein is Small ubiquitin-related modifier 1.